Reading from the N-terminus, the 131-residue chain is Putative gamma-taxilin 2 (131 aa).

The protein belongs to the taxilin family.

The protein is Putative gamma-taxilin 2 (TXLNGY) of Pan troglodytes (Chimpanzee).